The following is a 352-amino-acid chain: MNVLGIETSCDETAVAIVKDGTHVCSNVVATQIPFHAPYRGIVPELASRKHIEWILPTVKEALARAQLTLADIDGIAVTHAPGLTGSLLVGLTFAKTLAWSMHLPFIAVNHLHAHFCAAHVEHDLAYPYVGLLASGGHALVCVVHDFDQVEALGATIDDAPGEAFDKVAAFYGFGYPGGKVIETLAEQGDARAARFPLPHFHGKGHRYDVSYSGLKTAVIHQLDHFWNKEYERTAQNIAAAFQACAINILLRPLARALQDTGLPTAVVCGGVAANSLLRKSVADWKHARCVFPSREYCTDNAVMVAALGYRYLIRGDRSFYGVTERSRIAHFSKRGGDRLAAQRSAASQPLF.

Residues His111 and His115 each coordinate Fe cation. Substrate-binding positions include 133–137, Asp166, Gly179, and Asn275; that span reads LASGG. Asp300 is a Fe cation binding site.

This sequence belongs to the KAE1 / TsaD family. It depends on Fe(2+) as a cofactor.

Its subcellular location is the cytoplasm. It carries out the reaction L-threonylcarbamoyladenylate + adenosine(37) in tRNA = N(6)-L-threonylcarbamoyladenosine(37) in tRNA + AMP + H(+). Functionally, required for the formation of a threonylcarbamoyl group on adenosine at position 37 (t(6)A37) in tRNAs that read codons beginning with adenine. Is involved in the transfer of the threonylcarbamoyl moiety of threonylcarbamoyl-AMP (TC-AMP) to the N6 group of A37, together with TsaE and TsaB. TsaD likely plays a direct catalytic role in this reaction. The protein is tRNA N6-adenosine threonylcarbamoyltransferase of Treponema pallidum (strain Nichols).